A 298-amino-acid polypeptide reads, in one-letter code: tRNA-cytidine(32) 2-sulfurtransferase (298 aa).

A disordered region spans residues 1-26 (MTAVISLPDPPQRASRGPRVAGPGQD). The short motif at 57–62 (SGGKDS) is the PP-loop motif element. Residues Cys132, Cys135, and Cys223 each coordinate [4Fe-4S] cluster.

Belongs to the TtcA family. Homodimer. Mg(2+) serves as cofactor. Requires [4Fe-4S] cluster as cofactor.

It localises to the cytoplasm. It catalyses the reaction cytidine(32) in tRNA + S-sulfanyl-L-cysteinyl-[cysteine desulfurase] + AH2 + ATP = 2-thiocytidine(32) in tRNA + L-cysteinyl-[cysteine desulfurase] + A + AMP + diphosphate + H(+). Its pathway is tRNA modification. Catalyzes the ATP-dependent 2-thiolation of cytidine in position 32 of tRNA, to form 2-thiocytidine (s(2)C32). The sulfur atoms are provided by the cysteine/cysteine desulfurase (IscS) system. The sequence is that of tRNA-cytidine(32) 2-sulfurtransferase from Stenotrophomonas maltophilia (strain R551-3).